Here is a 135-residue protein sequence, read N- to C-terminus: NADPH-dependent 7-cyano-7-deazaguanine reductase (135 aa).

Cys48 functions as the Thioimide intermediate in the catalytic mechanism. The active-site Proton donor is Asp55. Substrate is bound by residues 70-72 and 89-90; these read IEL and HE.

The protein belongs to the GTP cyclohydrolase I family. QueF type 1 subfamily.

It localises to the cytoplasm. The enzyme catalyses 7-aminomethyl-7-carbaguanine + 2 NADP(+) = 7-cyano-7-deazaguanine + 2 NADPH + 3 H(+). It participates in tRNA modification; tRNA-queuosine biosynthesis. Catalyzes the NADPH-dependent reduction of 7-cyano-7-deazaguanine (preQ0) to 7-aminomethyl-7-deazaguanine (preQ1). The protein is NADPH-dependent 7-cyano-7-deazaguanine reductase of Prochlorococcus marinus (strain MIT 9303).